Here is a 122-residue protein sequence, read N- to C-terminus: Small ribosomal subunit protein uS12c (122 aa).

The protein belongs to the universal ribosomal protein uS12 family. Part of the 30S ribosomal subunit.

It is found in the plastid. Its subcellular location is the chloroplast. Its function is as follows. With S4 and S5 plays an important role in translational accuracy. Located at the interface of the 30S and 50S subunits. This is Small ribosomal subunit protein uS12c (rps12) from Chloranthus spicatus (Chulantree).